A 317-amino-acid polypeptide reads, in one-letter code: tRNA dimethylallyltransferase (317 aa).

18-25 provides a ligand contact to ATP; the sequence is GPTATGKT. A substrate-binding site is contributed by 20–25; it reads TATGKT. Interaction with substrate tRNA regions lie at residues 43-46, 167-171, and 281-288; these read DSAL, QRIQR, and KRQITWLR.

The protein belongs to the IPP transferase family. In terms of assembly, monomer. Requires Mg(2+) as cofactor.

The enzyme catalyses adenosine(37) in tRNA + dimethylallyl diphosphate = N(6)-dimethylallyladenosine(37) in tRNA + diphosphate. Catalyzes the transfer of a dimethylallyl group onto the adenine at position 37 in tRNAs that read codons beginning with uridine, leading to the formation of N6-(dimethylallyl)adenosine (i(6)A). This chain is tRNA dimethylallyltransferase, found in Alkalilimnicola ehrlichii (strain ATCC BAA-1101 / DSM 17681 / MLHE-1).